The chain runs to 246 residues: 1-(5-phosphoribosyl)-5-[(5-phosphoribosylamino)methylideneamino] imidazole-4-carboxamide isomerase (246 aa).

The Proton acceptor role is filled by aspartate 8. Residue aspartate 130 is the Proton donor of the active site.

This sequence belongs to the HisA/HisF family.

Its subcellular location is the cytoplasm. It carries out the reaction 1-(5-phospho-beta-D-ribosyl)-5-[(5-phospho-beta-D-ribosylamino)methylideneamino]imidazole-4-carboxamide = 5-[(5-phospho-1-deoxy-D-ribulos-1-ylimino)methylamino]-1-(5-phospho-beta-D-ribosyl)imidazole-4-carboxamide. The protein operates within amino-acid biosynthesis; L-histidine biosynthesis; L-histidine from 5-phospho-alpha-D-ribose 1-diphosphate: step 4/9. This is 1-(5-phosphoribosyl)-5-[(5-phosphoribosylamino)methylideneamino] imidazole-4-carboxamide isomerase from Alcanivorax borkumensis (strain ATCC 700651 / DSM 11573 / NCIMB 13689 / SK2).